The chain runs to 462 residues: Siroheme synthase (462 aa).

The tract at residues Met-1 to Met-203 is precorrin-2 dehydrogenase /sirohydrochlorin ferrochelatase. NAD(+) contacts are provided by residues Glu-22–Val-23 and Pro-43–Trp-44. Position 128 is a phosphoserine (Ser-128). Positions Gly-217 to Ala-462 are uroporphyrinogen-III C-methyltransferase. Position 226 (Pro-226) interacts with S-adenosyl-L-methionine. Asp-249 serves as the catalytic Proton acceptor. The Proton donor role is filled by Lys-271. S-adenosyl-L-methionine contacts are provided by residues Gly-302–Asp-304, Ile-307, Thr-332–Ala-333, Met-384, and Ala-413.

This sequence in the N-terminal section; belongs to the precorrin-2 dehydrogenase / sirohydrochlorin ferrochelatase family. The protein in the C-terminal section; belongs to the precorrin methyltransferase family.

The enzyme catalyses uroporphyrinogen III + 2 S-adenosyl-L-methionine = precorrin-2 + 2 S-adenosyl-L-homocysteine + H(+). It carries out the reaction precorrin-2 + NAD(+) = sirohydrochlorin + NADH + 2 H(+). It catalyses the reaction siroheme + 2 H(+) = sirohydrochlorin + Fe(2+). It functions in the pathway cofactor biosynthesis; adenosylcobalamin biosynthesis; precorrin-2 from uroporphyrinogen III: step 1/1. It participates in cofactor biosynthesis; adenosylcobalamin biosynthesis; sirohydrochlorin from precorrin-2: step 1/1. The protein operates within porphyrin-containing compound metabolism; siroheme biosynthesis; precorrin-2 from uroporphyrinogen III: step 1/1. Its pathway is porphyrin-containing compound metabolism; siroheme biosynthesis; siroheme from sirohydrochlorin: step 1/1. It functions in the pathway porphyrin-containing compound metabolism; siroheme biosynthesis; sirohydrochlorin from precorrin-2: step 1/1. In terms of biological role, multifunctional enzyme that catalyzes the SAM-dependent methylations of uroporphyrinogen III at position C-2 and C-7 to form precorrin-2 via precorrin-1. Then it catalyzes the NAD-dependent ring dehydrogenation of precorrin-2 to yield sirohydrochlorin. Finally, it catalyzes the ferrochelation of sirohydrochlorin to yield siroheme. The sequence is that of Siroheme synthase from Pseudoalteromonas atlantica (strain T6c / ATCC BAA-1087).